The chain runs to 339 residues: ATP-dependent 6-phosphofructokinase (339 aa).

Residues Gly-11, 72-73 (RY), and 102-105 (GDGS) each bind ATP. Asp-103 is a binding site for Mg(2+). Residues 125–127 (TID), Arg-162, and 169–171 (MGR) contribute to the substrate site. Asp-127 (proton acceptor) is an active-site residue. Residues 185 to 187 (GAD) and 214 to 216 (KSH) each bind ADP. Residues Glu-223, Arg-245, and 251–254 (HVIR) each bind substrate.

Belongs to the phosphofructokinase type A (PFKA) family. ATP-dependent PFK group I subfamily. Prokaryotic clade 'B1' sub-subfamily. As to quaternary structure, homotetramer. Requires Mg(2+) as cofactor.

The protein resides in the cytoplasm. The enzyme catalyses beta-D-fructose 6-phosphate + ATP = beta-D-fructose 1,6-bisphosphate + ADP + H(+). The protein operates within carbohydrate degradation; glycolysis; D-glyceraldehyde 3-phosphate and glycerone phosphate from D-glucose: step 3/4. Its activity is regulated as follows. Allosterically activated by ADP and other diphosphonucleosides, and allosterically inhibited by phosphoenolpyruvate. Functionally, catalyzes the phosphorylation of D-fructose 6-phosphate to fructose 1,6-bisphosphate by ATP, the first committing step of glycolysis. This Streptococcus thermophilus (strain ATCC BAA-491 / LMD-9) protein is ATP-dependent 6-phosphofructokinase.